Here is a 1035-residue protein sequence, read N- to C-terminus: NACHT, LRR and PYD domains-containing protein 3 (1035 aa).

The 93-residue stretch at 1–93 folds into the Pyrin domain; it reads MKMMSVRCKL…WEKAKKDQPE (93 aa). S5 is modified (phosphoserine). A disulfide bond links C8 and C106. Y13 is subject to Phosphotyrosine. A lipid anchor (S-palmitoyl cysteine) is attached at C128. Residues 129 to 132 form a required for binding to phosphatidylinositol 4-phosphate (PtdIns4P) region; the sequence is KKKK. A phosphotyrosine mark is found at Y134 and Y138. Positions 138 to 208 constitute an FISNA domain; that stretch reads YRRHVRSRFY…SSLKLELLFE (71 aa). At S159 the chain carries Phosphoserine. Phosphotyrosine is present on Y166. ATP is bound at residue T167. The residue at position 199 (S199) is a Phosphoserine. The region spanning 218–534 is the NACHT domain; the sequence is HTVVFQGAAG…EFFAAMYYLL (317 aa). Residue 224 to 231 participates in ATP binding; sequence GAAGIGKT. Residues S263 and S293 each carry the phosphoserine modification. A Glycyl lysine isopeptide (Lys-Gly) (interchain with G-Cter in ubiquitin) cross-link involves residue K322. S332 carries the phosphoserine modification. Positions 353 to 357 match the KFERQ-like motif 1 motif; sequence LEKLQ. K428 participates in a covalent cross-link: Glycyl lysine isopeptide (Lys-Gly) (interchain with G-Cter in ubiquitin). Residue H520 coordinates ATP. Residues 603 to 607 carry the KFERQ-like motif 2 motif; the sequence is QVRLE. K689 is covalently cross-linked (Glycyl lysine isopeptide (Lys-Gly) (interchain with G-Cter in ubiquitin)). Residues S727 and S734 each carry the phosphoserine modification. 5 LRR repeats span residues 741 to 761, 770 to 791, 798 to 818, 827 to 848, and 855 to 875; these read SLTELDLSDNTLGDPGMRVLC, NIQRLWLGRCGLTHQCCFNISS, KLVELDLSDNALGDFGVRLLC, NLQKLWLVSCCLTSACCQDLAL, and SLTRLYIGENALGDSGVQVLC. A KFERQ-like motif 3 motif is present at residues 797-801; the sequence is QKLVE. Residue S805 is modified to Phosphoserine. 3 S-palmitoyl cysteine lipidation sites follow: C836, C837, and C843. Residue Y860 is modified to Phosphotyrosine. A Glycyl lysine isopeptide (Lys-Gly) (interchain with G-Cter in ubiquitin) cross-link involves residue K877. LRR repeat units lie at residues 884–905, 912–932, 941–962, and 969–990; these read NLQKLGLVNSGLTSLCCSALTS, NLTHLYLRSNALGDMGLKLLC, KLQMLELDNCSLTSHSCWDLST, and SLRKLNLSNNDLGDLCVVTLCE. A lipid anchor (S-palmitoyl cysteine) is attached at C957. K972 is covalently cross-linked (Glycyl lysine isopeptide (Lys-Gly) (interchain with G-Cter in ubiquitin)). A KFERQ-like motif 4 motif is present at residues 990-994; the sequence is EVLKQ. Phosphoserine is present on S1034.

This sequence belongs to the NLRP family. In terms of assembly, sensor component of NLRP3 inflammasomes; inflammasomes are supramolecular complexes that assemble in the cytosol in response to pathogens and other damage-associated signals and play critical roles in innate immunity and inflammation. The core of NLRP3 inflammasomes consists of a signal sensor component (NLRP3), an adapter (PYCARD/ASC), which recruits an effector pro-inflammatory caspase (CASP1 and, possibly, CASP4 and CASP5). Homodecamer; inactive NLRP3 forms homodecameric double-ring cages that hide pyrin domains within NACHT-LRR rings to avoid premature activation. Interacts (via pyrin domain) with PYCARD/ASC (via pyrin domain); interaction is direct. Interacts (via LRR repeat domain) with NEK7 (via N-terminus); the interaction is required for the formation of the complex NLRP3:PYCARD, oligomerization of PYCARD/ASC and activation of CASP1. Interacts (via LRR repeat domain) with NR4A1/Nur77 (via N-terminus); the interaction is direct, requires activation of NR4A1 by its ligands NBRE-containing dsDNA and lipopolysaccharide, and stimulates the association of NLRP3 with NEK7 for non-canonical NLRP3 inflammasome activation. Interacts with CARD8; leading to inhibit formation of the NLRP3 inflammasome. Interacts with MEFV; this interaction targets NLRP3 to degradation by autophagy, hence preventing excessive IL1B- and IL18-mediated inflammation. Interacts with EIF2AK2/PKR; this interaction requires EIF2AK2 activity, is accompanied by EIF2AK2 autophosphorylation and promotes inflammasome assembly in response to specific stimuli. Interacts with GBP5 (via DAPIN domain); this interaction promotes inflammasome assembly in response to microbial and soluble, but not crystalline, agents. Interacts with PML (isoform PML-1) (via the leucine-rich repeat (LRR) domain); PML-mediated increase in NLRP3 inflammasome activation does not depend upon this interaction. Interacts (via NACHT domain) with DHX33 (via DEAH box); NLRP3 activation in presence of cytosolic dsRNA is mediated by DHX33. Interacts (via NACHT and LRR domains) with ARRB2; this interaction is direct and inducible by polyunsaturated fatty acids (PUFAs). Interacts (via NACHT domain) with DDX3X under both LPS-primed and inflammasome-activating conditions. Interacts with IRF4 (via the LRR domain); this interaction is direct and is required for optimal IRF4 binding to IL4 promoter and efficient IL4 transactivation during differentiation of Th2 helper T-cells. Interacts with MAVS; promoting localization to mitochondria and activation of the NLRP3 inflammasome. Interacts with MARK4; promoting localization of NLRP3 to the microtubule organizing center (MTOC). Interacts with TRIM50; this interaction also promotes NLRP3 oligomerization and subsequent inflammasome activation. Interacts with IRGM; preventing NLRP3 inflammasome assembly and promoting NLRP3 degradation. Interacts (via NACHT and LLR domains) with ABHD8; this interaction is enhanced in the presence of NLRP3 inflammasome inducers, such as ATP, nigericin, silica, or alum. Interaction with ABHD8 leads the recruitment of ZDHHC12, hence facilitating NLRP3 palmitoylation and degradation by the chaperone-mediated autophagy pathway (CMA), therefore attenuating NLRP3 inflammasome activation. In terms of processing, phosphorylation by MAPK8/JNK1 increases inflammasome activation by promoting deubiquitination by BRCC3 and NLRP3 homooligomerization. Phosphorylation at Ser-805 by CSNK1A1 prevents inflammasome activation by preventing NEK7 recruitment. Phosphorylation at Ser-5 in the pyrin domain inhibits homomultimerization of NLRP3 and activation of the NLRP3 inflammasome: dephosphorylation by protein phosphatase 2A (PP2A) promotes assembly of the NLRP3 inflammasome. Phosphorylation at Ser-293 by PKD/PRKD1 promotes NLRP3 inflammasome assembly. Phosphorylation by ERK1/MAPK3 promotes NLRP3 inflammasome assembly. Phosphorylation by BTK (at Tyr-134, Tyr-138 and Tyr-166) in the region that mediates binding to phosphatidylinositol phosphate, promotes relocalization of NLRP3 and assembly of the NLRP3 inflammasome. Phosphorylation at Tyr-860 inhibits NLRP3 inflammasome assembly: dephosphorylation by PTPN22 promotes inflammasome activation. Phosphorylated by LATS1 and LATS2 at Ser-263 following palmitoylation by ZDHHC1, promoting its relocalization to the microtubule organizing center (MTOC), where NLRP3 is activated by NEK7, leading to inflammasome assembly and activation. Ubiquitinated; undergoes both 'Lys-48'- and 'Lys-63'-linked polyubiquitination. Ubiquitination does not lead to degradation, but inhibits inflammasome activation. Deubiquitination is catalyzed by BRCC3 and associated with NLRP3 activation and inflammasome assembly. This process can be induced by the activation of Toll-like receptors (by LPS), through a non-transcriptional pathway dependent on the mitochondrial production of reactive oxygen species, and by ATP. Ubiquitinated by TRIM31 via 'Lys-48'-linked ubiquitination, leading to its degradation by the proteasome. Ubiquitinated at Lys-689 by the SCF(FBXL2) complex, leading to its degradation by the proteasome. Ubiquitinated by TRIM35 via 'lys-48' and 'Lys-63'-linked ubiquitination leading to inhibition of NLRP3 inflammasome activation. Undergoes 'Lys-27'-linked polyubiquitination by MARCHF5, leading to NLRP3-NEK7 complex formation and NLRP3 oligomerization. Post-translationally, the disulfide bond in the pyrin domain might play a role in reactive oxygen species-mediated activation. In terms of processing, palmitoylation by ZDHHC12 promotes NLRP3 degradation by the chaperone-mediated autophagy pathway (CMA) and therefore limits NLRP3 inflammasome activation. Interaction with ZDHHC12, and hence NLRP3 palmitoylation, is greatly enhanced by ABHD8. Following palmitoylation, HSPA8/HSC70 recognizes and binds the KFERQ-like motifs on NLRP3 and promotes NLRP3 recruitment to lysosomes, where it is degraded via the chaperone-mediated autophagy pathway in a LAMP2-dependent process. Palmitoylation at Cys-836 and Cys-837 by ZDHHC5 enhances its binding to NEK7 leading to inflammasome assembly and activation. Palmitoylation at Cys-128 and Cys-957 by ZDHHC1 facilitates phosphorylation at Ser-263 by LATS1 and LATS2, promoting its relocalization to the microtubule organizing center (MTOC), where NLRP3 is activated by NEK7, leading to inflammasome assembly and activation. Depalmitoylated by ABHD17A. Degraded via selective autophagy following interaction with IRGM. IRGM promotes NLRP3 recruitment to autophagosome membranes, promoting its SQSTM1/p62-dependent autophagy-dependent degradation.

The protein resides in the cytoplasm. It is found in the cytosol. It localises to the inflammasome. Its subcellular location is the cytoskeleton. The protein localises to the microtubule organizing center. The protein resides in the golgi apparatus membrane. It is found in the endoplasmic reticulum. It localises to the mitochondrion. Its subcellular location is the secreted. The protein localises to the nucleus. The catalysed reaction is ATP + H2O = ADP + phosphate + H(+). Under resting conditions, NLRP3 binds ADP and is autoinhibited. Inactive NLRP3 forms homodecameric double-ring cages that hide pyrin domains within NACHT-LRR rings to avoid premature activation. NLRP3 activation stimuli include extracellular ATP, nigericin, reactive oxygen species, crystals of monosodium urate or cholesterol, amyloid-beta fibers, environmental or industrial particles and nanoparticles, such as asbestos, silica, aluminum salts, cytosolic dsRNA, etc. Almost all stimuli trigger intracellular K(+) efflux. These stimuli lead to membrane perturbations that induce activation of NLRP3. Upon activation, NLRP3 is transported to microtubule organizing center (MTOC), where it is unlocked by NEK7, leading to its relocalization to dispersed trans-Golgi network (dTGN) vesicle membranes and recruitment of PYCARD/ASC for the formation of an active inflammasome complex. NEK7-activated NLRP3 forms a disk-shaped inflammasome. NLRP3 and PYCARD/ASC interact via their respective pyrin domains; interaction initiates speck formation (nucleation) which greatly enhances further addition of soluble PYCARD/ASC molecules to the speck in a prion-like polymerization process. Clustered PYCARD/ASC nucleates the formation of CASP1 filaments through the interaction of their respective CARD domains, acting as a platform for CASP1 polymerization and activation. Active CASP1 then processes IL1B and IL18 precursors, leading to the release of mature cytokines in the extracellular milieu and inflammatory response. NLRP3 inflammasome assembly is inhibited by IRGM, which impedes NLRP3 oligomerization. NLRP3 inflammasome is inhibited by cyclic AMP (cAMP), which directly binds NLRP3; inhibition is relieved by calcium-sensing receptor CASR, which inhibits production of cAMP. Specifically inhibited by sulfonylurea MCC950 (also named CP-456,773, CRID3), a potent and specific small-molecule inhibitor of the NLRP3 inflammasome that acts by preventing ATP hydrolysis. Its function is as follows. Sensor component of the NLRP3 inflammasome, which mediates inflammasome activation in response to defects in membrane integrity, leading to secretion of inflammatory cytokines IL1B and IL18 and pyroptosis. In response to pathogens and other damage-associated signals that affect the integrity of membranes, initiates the formation of the inflammasome polymeric complex composed of NLRP3, CASP1 and PYCARD/ASC. Recruitment of pro-caspase-1 (proCASP1) to the NLRP3 inflammasome promotes caspase-1 (CASP1) activation, which subsequently cleaves and activates inflammatory cytokines IL1B and IL18 and gasdermin-D (GSDMD), promoting cytokine secretion and pyroptosis. Activation of NLRP3 inflammasome is also required for HMGB1 secretion; stimulating inflammatory responses. Under resting conditions, ADP-bound NLRP3 is autoinhibited. NLRP3 activation stimuli include extracellular ATP, nigericin, reactive oxygen species, crystals of monosodium urate or cholesterol, amyloid-beta fibers, environmental or industrial particles and nanoparticles, such as asbestos, silica, aluminum salts, cytosolic dsRNA, etc. Almost all stimuli trigger intracellular K(+) efflux. These stimuli lead to membrane perturbation and activation of NLRP3. Upon activation, NLRP3 is transported to microtubule organizing center (MTOC), where it is unlocked by NEK7, leading to its relocalization to dispersed trans-Golgi network (dTGN) vesicle membranes and formation of an active inflammasome complex. Associates with dTGN vesicle membranes by binding to phosphatidylinositol 4-phosphate (PtdIns4P). Shows ATPase activity. Independently of inflammasome activation, regulates the differentiation of T helper 2 (Th2) cells and has a role in Th2 cell-dependent asthma and tumor growth. During Th2 differentiation, required for optimal IRF4 binding to IL4 promoter and for IRF4-dependent IL4 transcription. Binds to the consensus DNA sequence 5'-GRRGGNRGAG-3'. May also participate in the transcription of IL5, IL13, GATA3, CCR3, CCR4 and MAF. The protein is NACHT, LRR and PYD domains-containing protein 3 of Rattus norvegicus (Rat).